The chain runs to 152 residues: SsrA-binding protein (152 aa).

Residues 129–140 (KREDMKKKDSQR) show a composition bias toward basic and acidic residues. Residues 129–152 (KREDMKKKDSQRELSQALKSKNRE) form a disordered region. Residues 141–152 (ELSQALKSKNRE) show a composition bias toward polar residues.

This sequence belongs to the SmpB family.

The protein localises to the cytoplasm. In terms of biological role, required for rescue of stalled ribosomes mediated by trans-translation. Binds to transfer-messenger RNA (tmRNA), required for stable association of tmRNA with ribosomes. tmRNA and SmpB together mimic tRNA shape, replacing the anticodon stem-loop with SmpB. tmRNA is encoded by the ssrA gene; the 2 termini fold to resemble tRNA(Ala) and it encodes a 'tag peptide', a short internal open reading frame. During trans-translation Ala-aminoacylated tmRNA acts like a tRNA, entering the A-site of stalled ribosomes, displacing the stalled mRNA. The ribosome then switches to translate the ORF on the tmRNA; the nascent peptide is terminated with the 'tag peptide' encoded by the tmRNA and targeted for degradation. The ribosome is freed to recommence translation, which seems to be the essential function of trans-translation. In Pelobacter propionicus (strain DSM 2379 / NBRC 103807 / OttBd1), this protein is SsrA-binding protein.